Here is a 1070-residue protein sequence, read N- to C-terminus: uncharacterized protein (1070 aa).

5 disordered regions span residues 66 to 88 (EKEK…PGLE), 355 to 388 (DLDF…DFSN), 423 to 483 (EDDL…EQID), 667 to 692 (EELK…EETE), and 735 to 786 (SKTQ…NNNN). Low complexity predominate over residues 73-83 (NENTSNVNKIK). 2 stretches are compositionally biased toward basic and acidic residues: residues 435 to 460 (KKEE…EEYR) and 474 to 483 (MKMHEKEQID). Positions 475–736 (KMHEKEQIDD…EMRLQLIRSK (262 aa)) form a coiled coil. The segment covering 735–745 (SKTQGTSSTFI) has biased composition (polar residues). Residues 751–765 (KHLESLKEEKKKEVK) are compositionally biased toward basic and acidic residues. A compositionally biased stretch (low complexity) spans 773–786 (NNNNNNNNNNNNNN).

This is an uncharacterized protein from Plasmodium falciparum (isolate 3D7).